Consider the following 206-residue polypeptide: Small ribosomal subunit protein uS4A (206 aa).

One can recognise an S4 RNA-binding domain in the interval 98–164; that stretch reads MRLDNVVYRL…EKFKTFAENP (67 aa).

The protein belongs to the universal ribosomal protein uS4 family. As to quaternary structure, part of the 30S ribosomal subunit. Contacts protein S5. The interaction surface between S4 and S5 is involved in control of translational fidelity.

One of the primary rRNA binding proteins, it binds directly to 16S rRNA where it nucleates assembly of the body of the 30S subunit. Its function is as follows. With S5 and S12 plays an important role in translational accuracy. This is Small ribosomal subunit protein uS4A from Clostridium botulinum (strain ATCC 19397 / Type A).